The sequence spans 141 residues: Large ribosomal subunit protein uL11 (141 aa).

The protein belongs to the universal ribosomal protein uL11 family. As to quaternary structure, part of the ribosomal stalk of the 50S ribosomal subunit. Interacts with L10 and the large rRNA to form the base of the stalk. L10 forms an elongated spine to which L12 dimers bind in a sequential fashion forming a multimeric L10(L12)X complex. In terms of processing, one or more lysine residues are methylated.

Forms part of the ribosomal stalk which helps the ribosome interact with GTP-bound translation factors. The chain is Large ribosomal subunit protein uL11 from Limosilactobacillus fermentum (strain NBRC 3956 / LMG 18251) (Lactobacillus fermentum).